Consider the following 358-residue polypeptide: HLA class I histocompatibility antigen, alpha chain E (358 aa).

The first 21 residues, methionine 1–alanine 21, serve as a signal peptide directing secretion. The interval glycine 22 to alanine 111 is alpha-1. The Extracellular portion of the chain corresponds to glycine 22 to isoleucine 305. 5 residues coordinate a peptide antigen: tyrosine 28, glutamate 84, serine 87, asparagine 98, and tyrosine 105. Asparagine 107 is a glycosylation site (N-linked (GlcNAc...) asparagine). The tract at residues glycine 112–leucine 203 is alpha-2. A disulfide bridge links cysteine 122 with cysteine 185. Residues serine 164, lysine 167, glutamine 177, tyrosine 180, and tyrosine 192 each coordinate a peptide antigen. Residues glutamate 204–tryptophan 295 form an alpha-3 region. The Ig-like C1-type domain maps to proline 206 to arginine 294. A disulfide bond links cysteine 224 and cysteine 280. The interval lysine 296–isoleucine 305 is connecting peptide. Residues valine 306 to tryptophan 329 traverse the membrane as a helical segment. Over arginine 330–leucine 358 the chain is Cytoplasmic. A disordered region spans residues serine 333–leucine 358. Residues aspartate 348 to leucine 358 are compositionally biased toward polar residues. Serine 353 is subject to Phosphoserine.

It belongs to the MHC class I family. As to quaternary structure, forms a heterotrimer with B2M and a self- or a pathogen-derived peptide (peptide-bound HLA-E-B2M). Similarly to MHC class Ia assembly, HLA-E-B2M heterodimer interacts with components of the antigen processing machinery TAPBP and TAP1-TAP2 complex; this interaction is required for peptide loading and translocation to the cell surface. Interacts with CALCR; this interaction is required for appropriate folding. The optimum binding peptide is a nonamer (VL9) that is primarily derived from amino-acid residues 3-11 of the signal sequences of most HLA-A, -B, -C and -G molecules. The VL9 peptide anchors to five main sites in the peptide-binding groove of HLA-E. Peptide-bound HLA-E-B2M complex interacts with KLRD1-KLRC1 receptor on NK cells. Binds with lower affinity to activating KLRD1-KLRC2. The common subunit KLRC1 plays a prominent role in directly interacting with HLA-E. Peptide-bound HLA-E-B2M interacts with the alpha-beta TCR on unconventional CD8+ T cells. Peptide-free HLA-E interacts with HLA-F-B2M complex; this interaction may regulate the intracellular trafficking and the stability of peptide-free MHC class I open conformers (OCs). Post-translationally, N-glycosylated. The soluble form (sHLA-E) can be partly produced by proteolytic cleavage at the cell surface (shedding) by a matrix metalloproteinase. Alternative splicing is also suggested as a mechanism for generation of sHLA-E, although it remains to be proved. Expressed in secretory endometrial cells during pregnancy (at protein level). The expression in nonlymphoid tissues is restricted to endothelial cells from all types of vessels, including arteries, veins, capillaries, and lymphatics (at protein level). In lymphoid organs, it is mainly expressed in endothelial venules, B and T cells, monocytes, macrophages, NK cells and megakaryocytes (at protein level).

The protein resides in the cell membrane. It is found in the golgi apparatus membrane. It localises to the secreted. Functionally, non-classical major histocompatibility class Ib molecule involved in immune self-nonself discrimination. In complex with B2M/beta-2-microglobulin binds nonamer self-peptides derived from the signal sequence of classical MHC class Ia molecules (VL9 peptides - VMAPRT[V/L][L/V/I/F]L). Peptide-bound HLA-E-B2M heterotrimeric complex primarily functions as a ligand for natural killer (NK) cell inhibitory receptor KLRD1-KLRC1, enabling NK cells to monitor the expression of other MHC class I molecules in healthy cells and to tolerate self. Upon cellular stress, preferentially binds signal sequence-derived peptides from stress-induced chaperones and is no longer recognized by NK cell inhibitory receptor KLRD1-KLRC1, resulting in impaired protection from NK cells. Binds signal sequence-derived peptides from non-classical MHC class Ib HLA-G molecules and acts as a ligand for NK cell activating receptor KLRD1-KLRC2, likely playing a role in the generation and effector functions of adaptive NK cells and in maternal-fetal tolerance during pregnancy. Besides self-peptides, can also bind and present pathogen-derived peptides conformationally similar to VL9 peptides to alpha-beta T cell receptor (TCR) on unconventional CD8-positive cytotoxic T cells, ultimately triggering antimicrobial immune response. Presents HIV gag peptides (immunodominant KAFSPEVIPMF and subdominant KALGPAATL epitopes) predominantly to CD8-positive T cell clones expressing a TRAV17-containing TCR, triggering HLA-E-restricted T cell responses. Presents mycobacterial peptides to HLA-E-restricted CD8-positive T cells eliciting both cytotoxic and immunoregulatory functions. In terms of biological role, (Microbial infection) Viruses like human cytomegalovirus have evolved an escape mechanism whereby virus-induced down-regulation of host MHC class I molecules is coupled to the binding of viral peptides to HLA-E, restoring HLA-E expression and inducing HLA-E-dependent NK cell immune tolerance to infected cells. Its function is as follows. (Microbial infection) May bind HIV-1 gag/Capsid protein p24-derived peptide (AISPRTLNA) on infected cells and may inhibit NK cell cytotoxicity, a mechanism that allows HIV-1 to escape immune recognition. (Microbial infection) Upon SARS-CoV-2 infection, may contribute to functional exhaustion of cytotoxic NK cells and CD8-positive T cells. Binds SARS-CoV-2 S/Spike protein S1-derived peptide (LQPRTFLL) expressed on the surface of lung epithelial cells, inducing NK cell exhaustion and dampening of antiviral immune surveillance. This is HLA class I histocompatibility antigen, alpha chain E from Homo sapiens (Human).